The primary structure comprises 184 residues: MLGDYRSGKTAIFNEIVGRKFGSYTNPSTFDYFYKEIMVDNELVGCNIWDTAGHEKFTTNLNKSFYRDVNCCVLCFDLHFEDSFKNLNKWMNEFHSKCLENGLENMELLPPFVLIGTKSDIPRTDISISNERIEQWCKNIEGQGIIDKVHYFETSAKLSQNIIMPFNTITKLALNYSNSIQKIK.

3 to 10 (GDYRSGKT) serves as a coordination point for GTP. An Effector region motif is present at residues 25–32 (TNPSTFDY). Residues 50–54 (DTAGH) and 117–120 (TKSD) contribute to the GTP site.

The protein belongs to the small GTPase superfamily. Rab family.

In Dictyostelium discoideum (Social amoeba), this protein is Ras-related protein RabN2 (rabN2).